Reading from the N-terminus, the 259-residue chain is Global transcriptional regulator CodY (259 aa).

Positions 1–155 (MDLLSKTRRI…GATVVGMEIL (155 aa)) are GAF domain. The H-T-H motif DNA-binding region spans 203–222 (ASKIADRVGITRSVIVNALR).

The protein belongs to the CodY family.

The protein localises to the cytoplasm. DNA-binding global transcriptional regulator which is involved in the adaptive response to starvation and acts by directly or indirectly controlling the expression of numerous genes in response to nutrient availability. During rapid exponential growth, CodY is highly active and represses genes whose products allow adaptation to nutrient depletion. The sequence is that of Global transcriptional regulator CodY from Brevibacillus brevis (strain 47 / JCM 6285 / NBRC 100599).